We begin with the raw amino-acid sequence, 1321 residues long: Serine/threonine-protein kinase SIK3 (1321 aa).

A disordered region spans residues 1–59 (MAAAAASGAGGAAGAGTGGAGPAGRLLPPPAPGSPAAPAAVSPAAGQPRPPAPASRGPM). The segment covering 8-22 (GAGGAAGAGTGGAGP) has biased composition (gly residues). Over residues 36–47 (AAPAAVSPAAGQ) the composition is skewed to low complexity. Residues 66–317 (YEIDRTIGKG…MEQICKHKWM (252 aa)) enclose the Protein kinase domain. Thr-71 is modified (phosphothreonine). Residues 72–80 (IGKGNFAVV) and Lys-95 contribute to the ATP site. Phosphothreonine is present on Glu-113. Asp-188 acts as the Proton acceptor in catalysis. Residue Thr-221 is modified to Phosphothreonine; by LKB1. Residues 344–384 (PLNEDVLLAMEDMGLDKEQTLQSLRSDAYDHYSAIYSLLCD) enclose the UBA domain. Thr-469 is subject to Phosphothreonine. Residues Ser-551, Ser-591, and Ser-592 each carry the phosphoserine modification. The tract at residues 585 to 614 (TPVDEESSDGEPDQEAVQSSTYKDSNTLHL) is disordered. Residues 587 to 598 (VDEESSDGEPDQ) are compositionally biased toward acidic residues. Positions 600–613 (AVQSSTYKDSNTLH) are enriched in polar residues. Ser-626 and Ser-647 each carry phosphoserine. The disordered stretch occupies residues 727 to 772 (IQPSSPPPNHPNNHLFRQPSNSPPPMSSAMIQPHGAASSSQFQGLP). Polar residues predominate over residues 763-772 (ASSSQFQGLP). The residue at position 866 (Ser-866) is a Phosphoserine. The disordered stretch occupies residues 894–945 (LFSDQSRGSPSSYSPSTGVGFSPTQALKVPPLDQFPTFPPSAHQQPPHYTTS). A compositionally biased stretch (low complexity) spans 896–909 (SDQSRGSPSSYSPS). The segment covering 935–945 (AHQQPPHYTTS) has biased composition (polar residues). Ser-978 carries the post-translational modification Phosphoserine. Residue Arg-986 is modified to Omega-N-methylarginine. Residues 1256 to 1265 (SLMGSQQFQD) show a composition bias toward polar residues. Residues 1256 to 1289 (SLMGSQQFQDGENEECGASLGGHEHPDLSDGSQH) are disordered.

The protein belongs to the protein kinase superfamily. CAMK Ser/Thr protein kinase family. SNF1 subfamily. In terms of assembly, binds to and is activated by YWHAZ when phosphorylated on Thr-221. Interacts with 14-3-3 proteins. Interacts with HDAC4; this interaction leads to HDAC4 retention in the cytoplasm. Interacts with DEPTOR, MLST8/GbetaL, RICTOR and RPTOR. The cofactor is Mg(2+). In terms of processing, phosphorylated at Thr-221 by STK11/LKB1 in complex with STE20-related adapter-alpha (STRADA) pseudo kinase and CAB39. Phosphorylation at Thr-221 is inhibited in response to PTHLH/PTHrP. Phosphorylated at Thr-469 and Ser-551 in response to cAMP signaling. As to expression, expressed in chondrocytes.

Its subcellular location is the cytoplasm. It carries out the reaction L-seryl-[protein] + ATP = O-phospho-L-seryl-[protein] + ADP + H(+). The enzyme catalyses L-threonyl-[protein] + ATP = O-phospho-L-threonyl-[protein] + ADP + H(+). Its activity is regulated as follows. Activated by phosphorylation on Thr-221. Functionally, positive regulator of mTOR signaling that functions by triggering the degradation of DEPTOR, an mTOR inhibitor. Involved in the dynamic regulation of mTOR signaling in chondrocyte differentiation during skeletogenesis. Negatively regulates cAMP signaling pathway possibly by acting on CRTC2/TORC2 and CRTC3/TORC3. Prevents HDAC4 translocation to the nucleus. This Homo sapiens (Human) protein is Serine/threonine-protein kinase SIK3.